The following is a 274-amino-acid chain: Nitrogenase iron protein (274 aa).

Residue 8 to 15 coordinates ATP; sequence GKGGIGKS. Residue Cys94 coordinates [4Fe-4S] cluster. Arg97 bears the ADP-ribosylarginine; by dinitrogenase reductase ADP-ribosyltransferase mark. Position 131 (Cys131) interacts with [4Fe-4S] cluster.

Belongs to the NifH/BchL/ChlL family. Homodimer. It depends on [4Fe-4S] cluster as a cofactor. In terms of processing, the reversible ADP-ribosylation of Arg-97 inactivates the nitrogenase reductase and regulates nitrogenase activity.

The enzyme catalyses N2 + 8 reduced [2Fe-2S]-[ferredoxin] + 16 ATP + 16 H2O = H2 + 8 oxidized [2Fe-2S]-[ferredoxin] + 2 NH4(+) + 16 ADP + 16 phosphate + 6 H(+). In terms of biological role, the key enzymatic reactions in nitrogen fixation are catalyzed by the nitrogenase complex, which has 2 components: the iron protein and the molybdenum-iron protein. The sequence is that of Nitrogenase iron protein from Chlorobium phaeovibrioides (strain DSM 265 / 1930) (Prosthecochloris vibrioformis (strain DSM 265)).